Here is a 250-residue protein sequence, read N- to C-terminus: 5'-nucleotidase SurE (250 aa).

Positions 8, 9, 40, and 92 each coordinate a divalent metal cation.

This sequence belongs to the SurE nucleotidase family. A divalent metal cation is required as a cofactor.

It is found in the cytoplasm. The catalysed reaction is a ribonucleoside 5'-phosphate + H2O = a ribonucleoside + phosphate. Nucleotidase that shows phosphatase activity on nucleoside 5'-monophosphates. This chain is 5'-nucleotidase SurE, found in Dichelobacter nodosus (strain VCS1703A).